The primary structure comprises 411 residues: LL-diaminopimelate aminotransferase 1 (411 aa).

Substrate-binding residues include Tyr-15 and Gly-42. Pyridoxal 5'-phosphate-binding positions include Tyr-72, 108 to 109 (SK), Tyr-132, Asn-187, Tyr-218, and 246 to 248 (SFS). Residues Lys-109, Tyr-132, and Asn-187 each coordinate substrate. N6-(pyridoxal phosphate)lysine is present on Lys-249. Pyridoxal 5'-phosphate-binding residues include Arg-257 and Asn-292. Positions 292 and 388 each coordinate substrate.

The protein belongs to the class-I pyridoxal-phosphate-dependent aminotransferase family. LL-diaminopimelate aminotransferase subfamily. As to quaternary structure, homodimer. Pyridoxal 5'-phosphate serves as cofactor.

It catalyses the reaction (2S,6S)-2,6-diaminopimelate + 2-oxoglutarate = (S)-2,3,4,5-tetrahydrodipicolinate + L-glutamate + H2O + H(+). It functions in the pathway amino-acid biosynthesis; L-lysine biosynthesis via DAP pathway; LL-2,6-diaminopimelate from (S)-tetrahydrodipicolinate (aminotransferase route): step 1/1. Functionally, involved in the synthesis of meso-diaminopimelate (m-DAP or DL-DAP), required for both lysine and peptidoglycan biosynthesis. Catalyzes the direct conversion of tetrahydrodipicolinate to LL-diaminopimelate. This is LL-diaminopimelate aminotransferase 1 from Nostoc sp. (strain PCC 7120 / SAG 25.82 / UTEX 2576).